We begin with the raw amino-acid sequence, 219 residues long: Octanoyltransferase (219 aa).

One can recognise a BPL/LPL catalytic domain in the interval 31–219 (EDLPGFLVFC…KLKRRLLEVL (189 aa)). Substrate-binding positions include 69–76 (RGGRATYH), 153–155 (SVG), and 166–168 (GAA). C184 (acyl-thioester intermediate) is an active-site residue.

This sequence belongs to the LipB family.

It localises to the cytoplasm. It catalyses the reaction octanoyl-[ACP] + L-lysyl-[protein] = N(6)-octanoyl-L-lysyl-[protein] + holo-[ACP] + H(+). It functions in the pathway protein modification; protein lipoylation via endogenous pathway; protein N(6)-(lipoyl)lysine from octanoyl-[acyl-carrier-protein]: step 1/2. Its function is as follows. Catalyzes the transfer of endogenously produced octanoic acid from octanoyl-acyl-carrier-protein onto the lipoyl domains of lipoate-dependent enzymes. Lipoyl-ACP can also act as a substrate although octanoyl-ACP is likely to be the physiological substrate. The polypeptide is Octanoyltransferase (Bdellovibrio bacteriovorus (strain ATCC 15356 / DSM 50701 / NCIMB 9529 / HD100)).